The primary structure comprises 307 residues: Urease accessory protein UreD (307 aa).

It belongs to the UreD family. UreD, UreF and UreG form a complex that acts as a GTP-hydrolysis-dependent molecular chaperone, activating the urease apoprotein by helping to assemble the nickel containing metallocenter of UreC. The UreE protein probably delivers the nickel.

Its subcellular location is the cytoplasm. Required for maturation of urease via the functional incorporation of the urease nickel metallocenter. The polypeptide is Urease accessory protein UreD (Prochlorococcus marinus (strain NATL1A)).